Consider the following 95-residue polypeptide: Small ribosomal subunit protein bS20 (95 aa).

The segment at 1–22 is disordered; the sequence is MANIKSQIKRNRTNENNRLRNK. A compositionally biased stretch (basic and acidic residues) spans 12–22; that stretch reads RTNENNRLRNK.

The protein belongs to the bacterial ribosomal protein bS20 family.

In terms of biological role, binds directly to 16S ribosomal RNA. The sequence is that of Small ribosomal subunit protein bS20 from Tropheryma whipplei (strain TW08/27) (Whipple's bacillus).